Consider the following 96-residue polypeptide: Large ribosomal subunit protein bL28 (96 aa).

This sequence belongs to the bacterial ribosomal protein bL28 family.

This is Large ribosomal subunit protein bL28 from Methylocella silvestris (strain DSM 15510 / CIP 108128 / LMG 27833 / NCIMB 13906 / BL2).